Consider the following 200-residue polypeptide: Probable nicotinate-nucleotide adenylyltransferase (200 aa).

The protein belongs to the NadD family.

The catalysed reaction is nicotinate beta-D-ribonucleotide + ATP + H(+) = deamido-NAD(+) + diphosphate. The protein operates within cofactor biosynthesis; NAD(+) biosynthesis; deamido-NAD(+) from nicotinate D-ribonucleotide: step 1/1. Catalyzes the reversible adenylation of nicotinate mononucleotide (NaMN) to nicotinic acid adenine dinucleotide (NaAD). The sequence is that of Probable nicotinate-nucleotide adenylyltransferase from Clavibacter michiganensis subsp. michiganensis (strain NCPPB 382).